A 328-amino-acid polypeptide reads, in one-letter code: Carbonic anhydrase-related protein 10 (328 aa).

Residues 31–301 (GWWAYKEVVQ…LNNRCIRTNI (271 aa)) form the Alpha-carbonic anhydrase domain.

This sequence belongs to the alpha-carbonic anhydrase family.

In terms of biological role, does not have a catalytic activity. The chain is Carbonic anhydrase-related protein 10 (CA10) from Macaca fascicularis (Crab-eating macaque).